Reading from the N-terminus, the 201-residue chain is IMP cyclohydrolase (201 aa).

Belongs to the archaeal IMP cyclohydrolase family.

It catalyses the reaction IMP + H2O = 5-formamido-1-(5-phospho-D-ribosyl)imidazole-4-carboxamide. It functions in the pathway purine metabolism; IMP biosynthesis via de novo pathway; IMP from 5-formamido-1-(5-phospho-D-ribosyl)imidazole-4-carboxamide: step 1/1. Its function is as follows. Catalyzes the cyclization of 5-formylamidoimidazole-4-carboxamide ribonucleotide to IMP. This chain is IMP cyclohydrolase, found in Methanococcus maripaludis (strain C5 / ATCC BAA-1333).